We begin with the raw amino-acid sequence, 179 residues long: NADH dehydrogenase [ubiquinone] 1 beta subcomplex subunit 9 (179 aa).

Ala2 carries the N-acetylalanine modification. The residue at position 85 (Ser85) is a Phosphoserine. The interval Glu136–Asp162 is disordered.

This sequence belongs to the complex I LYR family. As to quaternary structure, mammalian complex I is composed of 45 different subunits.

It is found in the mitochondrion inner membrane. In terms of biological role, accessory subunit of the mitochondrial membrane respiratory chain NADH dehydrogenase (Complex I), that is believed to be not involved in catalysis. Complex I functions in the transfer of electrons from NADH to the respiratory chain. The immediate electron acceptor for the enzyme is believed to be ubiquinone. The sequence is that of NADH dehydrogenase [ubiquinone] 1 beta subcomplex subunit 9 (NDUFB9) from Homo sapiens (Human).